The following is a 76-amino-acid chain: Rhesus theta defensin-1/2 subunit B (76 aa).

Residues Met-1–Ala-22 form the signal peptide. A propeptide spanning residues Arg-23–Leu-64 is cleaved from the precursor. A disordered region spans residues Ala-25 to Ala-54. Residues Ala-30 to Ala-44 are compositionally biased toward low complexity. Arg-65 participates in a covalent cross-link: Cyclopeptide (Arg-Cys) (interchain with C-73 in subunit A); in form RTD-1. A Cyclopeptide (Arg-Cys) (interchain with C-73 in subunit B); in form RTD-2 cross-link involves residue Arg-65. An intrachain disulfide couples Cys-68 to Cys-73. A Cyclopeptide (Cys-Arg) (interchain with R-65 in subunit A); in form RTD-1 cross-link involves residue Cys-73. Cys-73 participates in a covalent cross-link: Cyclopeptide (Cys-Arg) (interchain with R-65 in subunit B); in form RTD-2. A propeptide spanning residues Gln-74–Leu-76 is cleaved from the precursor.

Belongs to the alpha-defensin family. Theta subfamily. RTD-1 is a cyclic heterodimer composed of subunits A and B; disulfide-linked. RTD-2 is a cyclic homodimer composed of two subunits B; disulfide-linked. Forms a cyclic peptide with 1 subunit B (RTD-2) or with 1 subunit A (RTD-1). An additional intersubunit disulfide bond is formed. As to expression, RTD-1 is expressed in bone marrow. Detected in promyelocytes, myelocytes and mature neutrophils and monocytes.

Its function is as follows. RTD-1 and RTD-2 have similar antimicrobial activities against the Gram-positive bacteria S.aureus 502A and L.monocytogenes, the Gram-negative bacterium S.typhimurium, and the fungi C.albicans 16820 and C.neoformans 271A. RTD-2 is 2-3-fold less active than RTD-1 against E.coli ML35. In Macaca mulatta (Rhesus macaque), this protein is Rhesus theta defensin-1/2 subunit B (RTD1B).